The following is a 177-amino-acid chain: Large ribosomal subunit protein bL9 (177 aa).

Residues 151-177 form a disordered region; that stretch reads VEEEPAEEVEAPAETEVAEDAEEATEA.

This sequence belongs to the bacterial ribosomal protein bL9 family.

Its function is as follows. Binds to the 23S rRNA. The chain is Large ribosomal subunit protein bL9 from Maridesulfovibrio salexigens (strain ATCC 14822 / DSM 2638 / NCIMB 8403 / VKM B-1763) (Desulfovibrio salexigens).